A 472-amino-acid chain; its full sequence is Gamma-aminobutyric acid receptor subunit beta-2 (472 aa).

An N-terminal signal peptide occupies residues 1–23 (RVRKKDYFGIWSFPLIIAAVCAQ). Residues 24–239 (SVNDPSNMSL…LSLSFKLKRN (216 aa)) are Extracellular-facing. N-linked (GlcNAc...) asparagine glycosylation is found at Asn-30 and Asn-102. Tyr-119 is a binding site for histamine. A disulfide bridge connects residues Cys-158 and Cys-172. Residues 178–179 (SY) and Thr-224 each bind histamine. Residues Tyr-179 and Thr-224 each contribute to the 4-aminobutanoate site. Helical transmembrane passes span 240-260 (IGYFILQTYMPSILITILSWV), 271-290 (ARVALGITTVLTMTTINTHL), and 309-329 (GCFVFVFMALLEYALVNYIFF). Residues 287-308 (NTHLRETLPKIPYVKAIDMYLM) form an etomidate binding; allosteric effector region. At 330–450 (GRGPQRQKKA…LTDVNAIDRW (121 aa)) the chain is on the cytoplasmic side. The residue at position 401 (Tyr-401) is a Phosphotyrosine. The chain crosses the membrane as a helical span at residues 451–471 (SRIFFPVVFSFFNIVYWLYYV).

The protein belongs to the ligand-gated ion channel (TC 1.A.9) family. Gamma-aminobutyric acid receptor (TC 1.A.9.5) subfamily. GABRB2 sub-subfamily. Heteropentamer, formed by a combination of alpha (GABRA1-6), beta (GABRB1-3), gamma (GABRG1-3), delta (GABRD), epsilon (GABRE), rho (GABRR1-3), pi (GABRP) and theta (GABRQ) chains, each subunit exhibiting distinct physiological and pharmacological properties. Interacts with UBQLN1. May interact with KIF21B. Identified in a complex of 720 kDa composed of LHFPL4, NLGN2, GABRA1, GABRB2, GABRG2 and GABRB3. Glycosylated.

The protein localises to the postsynaptic cell membrane. It is found in the cell membrane. Its subcellular location is the cytoplasmic vesicle membrane. It catalyses the reaction chloride(in) = chloride(out). With respect to regulation, allosterically activated by benzodiazepines. Allosterically activated by the anesthetic etomidate. Inhibited by the antagonist bicuculline. Potentiated by histamine. Functionally, beta subunit of the heteropentameric ligand-gated chloride channel gated by gamma-aminobutyric acid (GABA), a major inhibitory neurotransmitter in the brain. GABA-gated chloride channels, also named GABA(A) receptors (GABAAR), consist of five subunits arranged around a central pore and contain GABA active binding site(s) located at the alpha and beta subunit interface(s). When activated by GABA, GABAARs selectively allow the flow of chloride anions across the cell membrane down their electrochemical gradient. Chloride influx into the postsynaptic neuron following GABAAR opening decreases the neuron ability to generate a new action potential, thereby reducing nerve transmission. GABAARs containing alpha-1 and beta-2 or -3 subunits exhibit synaptogenic activity; the gamma-2 subunit being necessary but not sufficient to induce rapid synaptic contacts formation. Extrasynaptic beta-2 receptors contribute to the tonic GABAergic inhibition. Beta-containing GABAARs can simultaneously bind GABA and histamine where histamine binds at the interface of two neighboring beta subunits, which may be involved in the regulation of sleep and wakefulness. The sequence is that of Gamma-aminobutyric acid receptor subunit beta-2 (GABRB2) from Bos taurus (Bovine).